Here is a 140-residue protein sequence, read N- to C-terminus: MAKKVVGLIKLQIPAGKANPSPPVGPALGQHGVNIMEFCKAFNAKTQAQDGMIIPVVITVFADRSFSFITKTPPAAVLLMKAAKIPKGSSVPNKDKVGKVTKAQVREIAELKMPDLNAFDIEAAIRTIEGTARSMGLEIV.

Belongs to the universal ribosomal protein uL11 family. Part of the ribosomal stalk of the 50S ribosomal subunit. Interacts with L10 and the large rRNA to form the base of the stalk. L10 forms an elongated spine to which L12 dimers bind in a sequential fashion forming a multimeric L10(L12)X complex. Post-translationally, one or more lysine residues are methylated.

Its function is as follows. Forms part of the ribosomal stalk which helps the ribosome interact with GTP-bound translation factors. This Syntrophotalea carbinolica (strain DSM 2380 / NBRC 103641 / GraBd1) (Pelobacter carbinolicus) protein is Large ribosomal subunit protein uL11.